The chain runs to 222 residues: Cytochrome b6 (222 aa).

A helical transmembrane segment spans residues 39-59; sequence IFYCLGGITLTCFLIQFATGF. Cys-42 is a heme c binding site. Residues His-93 and His-107 each coordinate heme b. 3 consecutive transmembrane segments (helical) span residues 97-117, 123-143, and 193-213; these read ASMM…TGGF, LTWV…VTGY, and LHTF…FLMI. Residues His-194 and His-209 each coordinate heme b.

Belongs to the cytochrome b family. PetB subfamily. In terms of assembly, the 4 large subunits of the cytochrome b6-f complex are cytochrome b6, subunit IV (17 kDa polypeptide, PetD), cytochrome f and the Rieske protein, while the 4 small subunits are PetG, PetL, PetM and PetN. The complex functions as a dimer. The cofactor is heme b. Heme c serves as cofactor.

The protein resides in the cellular thylakoid membrane. Functionally, component of the cytochrome b6-f complex, which mediates electron transfer between photosystem II (PSII) and photosystem I (PSI), cyclic electron flow around PSI, and state transitions. This Cyanothece sp. (strain PCC 7425 / ATCC 29141) protein is Cytochrome b6.